A 436-amino-acid polypeptide reads, in one-letter code: GTPase Der (436 aa).

EngA-type G domains follow at residues P4 to E167 and I176 to S351. Residues G10 to S17, D57 to I61, N119 to D122, G182 to S189, D229 to M233, and N294 to D297 each bind GTP. Positions I352 to D436 constitute a KH-like domain.

It belongs to the TRAFAC class TrmE-Era-EngA-EngB-Septin-like GTPase superfamily. EngA (Der) GTPase family. In terms of assembly, associates with the 50S ribosomal subunit.

In terms of biological role, GTPase that plays an essential role in the late steps of ribosome biogenesis. The protein is GTPase Der of Bacillus anthracis (strain A0248).